The chain runs to 498 residues: Glutathione hydrolase 6 (498 aa).

At 1-49 (MDATTGAVLYQKLQLWEPGMESEEEEEEEEIAEPLVLSLRRLQNTPGNK) the chain is on the cytoplasmic side. A helical; Signal-anchor for type II membrane protein membrane pass occupies residues 50–70 (VGGLPGAWTRLLAGLLLLAVS). Residues 71–498 (SSLALRQLQG…PSGCCPFQGY (428 aa)) lie on the Extracellular side of the membrane. Asparagine 162, asparagine 167, and asparagine 376 each carry an N-linked (GlcNAc...) asparagine glycan.

The protein belongs to the gamma-glutamyltransferase family. As to quaternary structure, heterodimer composed of the light and heavy chains. The active site is located in the light chain. Cleaved by autocatalysis into a large and a small subunit and the autocatalytic cleavage is essential to the functional activation of the enzyme.

Its subcellular location is the membrane. The enzyme catalyses an N-terminal (5-L-glutamyl)-[peptide] + an alpha-amino acid = 5-L-glutamyl amino acid + an N-terminal L-alpha-aminoacyl-[peptide]. The catalysed reaction is glutathione + H2O = L-cysteinylglycine + L-glutamate. It carries out the reaction an S-substituted glutathione + H2O = an S-substituted L-cysteinylglycine + L-glutamate. The protein operates within sulfur metabolism; glutathione metabolism. Functionally, hydrolyzes and transfers gamma-glutamyl moieties from glutathione and other gamma-glutamyl compounds to acceptors. The protein is Glutathione hydrolase 6 of Rattus norvegicus (Rat).